Here is a 794-residue protein sequence, read N- to C-terminus: Sucrose synthase (794 aa).

Residues 263-742 form a GT-B glycosyltransferase region; the sequence is MISRLLILSP…ALDRVASRYT (480 aa).

It belongs to the glycosyltransferase 1 family. Homotetramer.

It carries out the reaction an NDP-alpha-D-glucose + D-fructose = a ribonucleoside 5'-diphosphate + sucrose + H(+). The catalysed reaction is ADP-alpha-D-glucose + D-fructose = sucrose + ADP + H(+). Its activity is regulated as follows. Inhibited by GDP over 10 mM and by over 2 mM MgCl(2). Functionally, catalyzes the reversible conversion of sucrose and a nucleotide disphosphate (NDP) into fructose and NDP-glucose; although the reaction is freely reversible in vitro, the physiological reaction seems to be sucrose cleavage. Unlike characterized plant enzymes prefers ADP as a cosubstrate, whereas plants prefer UDP. The KM for sucrose is 8-fold lower in the presence of ADP than UDP. Its preference for ADP over UDP suggests it may directly link sucrose and glycogen metabolism. The chain is Sucrose synthase (ss2) from Nitrosomonas europaea (strain ATCC 19718 / CIP 103999 / KCTC 2705 / NBRC 14298).